Consider the following 42-residue polypeptide: uncharacterized protein (42 aa).

Residues 5–27 (FLHTNITIIPHSVLYVSLSYYII) form a helical membrane-spanning segment.

It localises to the membrane. This is an uncharacterized protein from Saccharomyces cerevisiae (strain ATCC 204508 / S288c) (Baker's yeast).